Consider the following 119-residue polypeptide: uncharacterized protein (119 aa).

A signal peptide spans M1 to A26. The region spanning Y30–Y104 is the SH3b domain.

This sequence to B.subtilis YraJ.

This is an uncharacterized protein from Bacillus subtilis (strain 168).